Reading from the N-terminus, the 339-residue chain is Anthranilate phosphoribosyltransferase (339 aa).

5-phospho-alpha-D-ribose 1-diphosphate contacts are provided by residues G79, 82–83 (GD), T87, 89–92 (NIST), 107–115 (KHGNRAVSS), and S119. Position 79 (G79) interacts with anthranilate. S91 is a Mg(2+) binding site. N110 lines the anthranilate pocket. R165 is an anthranilate binding site. D224 and E225 together coordinate Mg(2+).

It belongs to the anthranilate phosphoribosyltransferase family. Homodimer. Mg(2+) serves as cofactor.

The catalysed reaction is N-(5-phospho-beta-D-ribosyl)anthranilate + diphosphate = 5-phospho-alpha-D-ribose 1-diphosphate + anthranilate. It participates in amino-acid biosynthesis; L-tryptophan biosynthesis; L-tryptophan from chorismate: step 2/5. Its function is as follows. Catalyzes the transfer of the phosphoribosyl group of 5-phosphorylribose-1-pyrophosphate (PRPP) to anthranilate to yield N-(5'-phosphoribosyl)-anthranilate (PRA). This is Anthranilate phosphoribosyltransferase from Geobacillus thermodenitrificans (strain NG80-2).